The chain runs to 187 residues: Large ribosomal subunit protein uL5 (187 aa).

Belongs to the universal ribosomal protein uL5 family. Part of the 50S ribosomal subunit; part of the 5S rRNA/L5/L18/L25 subcomplex. Contacts the 5S rRNA and the P site tRNA. Forms a bridge to the 30S subunit in the 70S ribosome.

This is one of the proteins that bind and probably mediate the attachment of the 5S RNA into the large ribosomal subunit, where it forms part of the central protuberance. In the 70S ribosome it contacts protein S13 of the 30S subunit (bridge B1b), connecting the 2 subunits; this bridge is implicated in subunit movement. Contacts the P site tRNA; the 5S rRNA and some of its associated proteins might help stabilize positioning of ribosome-bound tRNAs. The sequence is that of Large ribosomal subunit protein uL5 from Mycobacterium avium (strain 104).